The following is a 499-amino-acid chain: Alpha-L-arabinofuranosidase B (499 aa).

An N-terminal signal peptide occupies residues 1 to 18; that stretch reads MFSRRNLVALGLAATVSA. 2 N-linked (GlcNAc...) asparagine glycosylation sites follow: N83 and N202.

The protein belongs to the glycosyl hydrolase 54 family.

It catalyses the reaction Hydrolysis of terminal non-reducing alpha-L-arabinofuranoside residues in alpha-L-arabinosides.. The protein operates within glycan metabolism; L-arabinan degradation. Its function is as follows. Able to hydrolyze 1,5-, 1,3- and 1,2-alpha-linkages not only in L-arabinofuranosyl oligosaccharides, but also in polysac-charides containing terminal non-reducing L-arabinofuranoses in side chains, like L-arabinan, arabinogalactan and arabinoxylan. The protein is Alpha-L-arabinofuranosidase B (abfB) of Aspergillus niger.